The primary structure comprises 361 residues: sn-glycerol-3-phosphate import ATP-binding protein UgpC (361 aa).

An ABC transporter domain is found at 4 to 235; the sequence is LSFRNLKKTY…PASTFVAGFI (232 aa). 37-44 contributes to the ATP binding site; that stretch reads GPSGCGKS.

The protein belongs to the ABC transporter superfamily. sn-glycerol-3-phosphate importer (TC 3.A.1.1.3) family. The complex is composed of two ATP-binding proteins (UgpC), two transmembrane proteins (UgpA and UgpE) and a solute-binding protein (UgpB).

Its subcellular location is the cell inner membrane. It catalyses the reaction sn-glycerol 3-phosphate(out) + ATP + H2O = sn-glycerol 3-phosphate(in) + ADP + phosphate + H(+). Part of the ABC transporter complex UgpBAEC involved in sn-glycerol-3-phosphate (G3P) import. Responsible for energy coupling to the transport system. The chain is sn-glycerol-3-phosphate import ATP-binding protein UgpC from Bordetella avium (strain 197N).